A 129-amino-acid polypeptide reads, in one-letter code: MSEVTNNPTHNRLLAKLRAMGPYLRDPQSKEGLYYFDCLSVCIDDRKSPELREFWGWWMELEATEGGFTANYHIGKYDVEGNWLDLAIPKNALEEVNKTQNCFHLKLVKTLEENFQLSVAYHEQSVEFV.

Residues 99–119 (TQNCFHLKLVKTLEENFQLSV) are essential for activity.

Belongs to the Crl family.

Its subcellular location is the cytoplasm. Functionally, binds to the sigma-S subunit of RNA polymerase, activating expression of sigma-S-regulated genes. Stimulates RNA polymerase holoenzyme formation and may bind to several other sigma factors, such as sigma-70 and sigma-32. This chain is Sigma factor-binding protein Crl, found in Vibrio vulnificus (strain CMCP6).